Reading from the N-terminus, the 308-residue chain is Homeobox protein abdominal-A homolog (308 aa).

Positions 138 to 197 (RRRGRQTYTRFQTLELEKEFHFNHYLTRRRRIEIAHALCLTERQIKIWFQNRRMKLKKEL) form a DNA-binding region, homeobox. Over residues 207 to 221 (ARREREEQDKMKNES) the composition is skewed to basic and acidic residues. The disordered stretch occupies residues 207–277 (ARREREEQDK…SGNLGSHLHH (71 aa)). The segment covering 223–247 (KSAQQHHSQKQAQQEHTVVGSQQTS) has biased composition (low complexity). Positions 248 to 269 (NGGGTGGGTGGSGGAGSGGSSG) are enriched in gly residues.

The protein belongs to the Antp homeobox family.

It localises to the nucleus. Its function is as follows. Sequence-specific transcription factor which is part of a developmental regulatory system that provides cells with specific positional identities on the anterior-posterior axis. In Anopheles gambiae (African malaria mosquito), this protein is Homeobox protein abdominal-A homolog.